Consider the following 1255-residue polypeptide: DNA-directed RNA polymerase subunit beta' (1255 aa).

Zn(2+) is bound by residues C68, C70, C83, and C86. Mg(2+) contacts are provided by D457, D459, and D461. Zn(2+)-binding residues include C803, C885, C892, and C895. The span at N1220 to L1240 shows a compositional bias: acidic residues. Residues N1220–E1255 are disordered. A compositionally biased stretch (basic and acidic residues) spans D1246–E1255.

It belongs to the RNA polymerase beta' chain family. As to quaternary structure, the RNAP catalytic core consists of 2 alpha, 1 beta, 1 beta' and 1 omega subunit. When a sigma factor is associated with the core the holoenzyme is formed, which can initiate transcription. Requires Mg(2+) as cofactor. Zn(2+) is required as a cofactor.

It catalyses the reaction RNA(n) + a ribonucleoside 5'-triphosphate = RNA(n+1) + diphosphate. Its function is as follows. DNA-dependent RNA polymerase catalyzes the transcription of DNA into RNA using the four ribonucleoside triphosphates as substrates. This is DNA-directed RNA polymerase subunit beta' from Lachnoclostridium phytofermentans (strain ATCC 700394 / DSM 18823 / ISDg) (Clostridium phytofermentans).